A 225-amino-acid polypeptide reads, in one-letter code: Endonuclease V (225 aa).

Mg(2+)-binding residues include Asp43 and Asp110.

Belongs to the endonuclease V family. Mg(2+) is required as a cofactor.

It localises to the cytoplasm. The enzyme catalyses Endonucleolytic cleavage at apurinic or apyrimidinic sites to products with a 5'-phosphate.. Its function is as follows. DNA repair enzyme involved in the repair of deaminated bases. Selectively cleaves double-stranded DNA at the second phosphodiester bond 3' to a deoxyinosine leaving behind the intact lesion on the nicked DNA. This is Endonuclease V from Thermotoga neapolitana (strain ATCC 49049 / DSM 4359 / NBRC 107923 / NS-E).